Reading from the N-terminus, the 548-residue chain is tRNA (guanine(26)-N(2))-dimethyltransferase (548 aa).

A Trm1 methyltransferase domain is found at 30–470 (ASLTEGSAII…APWSFVWDVL (441 aa)). 4 residues coordinate S-adenosyl-L-methionine: R57, R137, D155, and A186. Zn(2+) contacts are provided by C317, C320, C354, and C357. Residues 523 to 548 (QMNPTENWGPKSKPGKRTIAEVDSKS) form a disordered region.

The protein belongs to the class I-like SAM-binding methyltransferase superfamily. Trm1 family.

The protein resides in the mitochondrion. The protein localises to the nucleus. It localises to the cytoplasm. It carries out the reaction guanosine(26) in tRNA + 2 S-adenosyl-L-methionine = N(2)-dimethylguanosine(26) in tRNA + 2 S-adenosyl-L-homocysteine + 2 H(+). In terms of biological role, dimethylates a single guanine residue at position 26 of nuclear- and mitochondrial-encoded tRNAs using S-adenosyl-L-methionine as donor of the methyl groups. Also has tRNA strand annealing and dissociation activity independently of its tRNA guanine-dimethyltransferase activity. The polypeptide is tRNA (guanine(26)-N(2))-dimethyltransferase (Schizosaccharomyces pombe (strain 972 / ATCC 24843) (Fission yeast)).